The chain runs to 247 residues: 14-3-3 protein gamma (247 aa).

Met1 carries the N-acetylmethionine modification. Val2 bears the N-acetylvaline; in 14-3-3 protein gamma, N-terminally processed mark. Residues 2 to 247 form an interaction with SPATA18/MIEAP region; it reads VDREQLVQKA…QDDDGGEGNN (246 aa). Ser71 carries the post-translational modification Phosphoserine. Phosphotyrosine is present on Tyr133. Residue Thr145 is modified to Phosphothreonine. Ser215 is subject to Phosphoserine. Residue Thr234 is modified to Phosphothreonine. Ser235 carries the post-translational modification Phosphoserine.

It belongs to the 14-3-3 family. As to quaternary structure, homodimer. Part of a complex that contains DSG3, PKP1, YAP1 and YWHAG; the complex is required for localization of DSG3 and YAP1 to the cell membrane in keratinocytes. Interacts with SAMSN1. Interacts with RAF1, SSH1 and CRTC2/TORC2. Interacts with ABL1 (phosphorylated form); the interaction retains it in the cytoplasm. Interacts with GAB2. Interacts with MDM4 (phosphorylated); negatively regulates MDM4 activity toward TP53. Interacts with PKA-phosphorylated AANAT and SIRT2. Interacts with the 'Thr-369' phosphorylated form of DAPK2. Interacts with PI4KB, TBC1D22A and TBC1D22B. Interacts with SLITRK1. Interacts with LRRK2; this interaction is dependent on LRRK2 phosphorylation. Interacts with MARK2 and MARK3. Interacts with MEFV. Interacts with ENDOG, TSC2 and PIK3C3; interaction with ENDOG weakens its interaction with TSC2 and PIK3C3. Interacts with (phosphorylated) WDR24. Interacts with BEST1; this interaction promotes L-glutamate channel activity leading to the positive regulation of NMDA glutamate receptor activity through the L-glutamate secretion. Interacts with PKP1 (when phosphorylated); the interaction results in translocation of PKP1 to the cytoplasm and loss of intercellular adhesion in keratinocytes. Interacts with SPATA18/MIEAP; a protein that also plays a role in MALM. Post-translationally, phosphorylated by various PKC isozymes.

The protein resides in the cytoplasm. Its subcellular location is the cytosol. It localises to the mitochondrion matrix. In terms of biological role, adapter protein implicated in the regulation of a large spectrum of both general and specialized signaling pathways. Binds to a large number of partners, usually by recognition of a phosphoserine or phosphothreonine motif. Binding generally results in the modulation of the activity of the binding partner. Promotes inactivation of WDR24 component of the GATOR2 complex by binding to phosphorylated WDR24. Participates in the positive regulation of NMDA glutamate receptor activity by promoting the L-glutamate secretion through interaction with BEST1. Reduces keratinocyte intercellular adhesion, via interacting with PKP1 and sequestering it in the cytoplasm, thereby reducing its incorporation into desmosomes. Plays a role in mitochondrial protein catabolic process (also named MALM) that promotes the degradation of damaged proteins inside mitochondria. The sequence is that of 14-3-3 protein gamma from Bos taurus (Bovine).